We begin with the raw amino-acid sequence, 102 residues long: Parathymosin (102 aa).

Residues 1 to 102 (MSEKSVEAAA…RQKTENGASA (102 aa)) form a disordered region. Residue serine 2 is modified to N-acetylserine. At serine 2 the chain carries Phosphoserine. Lysine 4 is subject to N6-acetyllysine. Phosphoserine is present on residues serine 5 and serine 13. Residues 13 to 37 (SAKDLKEKKEKVEEKAGRKERKKEV) show a composition bias toward basic and acidic residues. Lysine 15 carries the post-translational modification N6-acetyllysine. Acidic residues predominate over residues 38–76 (VEEEENGAEEEEEETAEDGEEEDDGDEEDEEEEEEEDEG). Threonine 52 bears the Phosphothreonine mark. Lysine 92 is modified (N6-acetyllysine).

It belongs to the pro/parathymosin family.

Its function is as follows. Parathymosin may mediate immune function by blocking the effect of prothymosin alpha which confers resistance to certain opportunistic infections. The sequence is that of Parathymosin (PTMS) from Bos taurus (Bovine).